The sequence spans 234 residues: Covalently-linked cell wall protein 14 (234 aa).

The first 22 residues, 1–22 (MASFLKISTLIAIVSTLQTTLA), serve as a signal peptide directing secretion. A CFEM domain is found at 23-109 (APPACLLACV…SSEESSASAS (87 aa)). 4 cysteine pairs are disulfide-bonded: C27/C66, C31/C61, C41/C49, and C51/C82. Position 46 (D46) interacts with heme. Low complexity predominate over residues 86 to 207 (SSQSSSSESE…ASSSESTTAT (122 aa)). The segment at 86 to 208 (SSQSSSSESE…SSSESTTATG (123 aa)) is disordered. G215 carries GPI-anchor amidated glycine lipidation. Residues 216–234 (SAAKVGLGALVGLVGAVLL) constitute a propeptide, removed in mature form.

The protein belongs to the CCW14 family. In terms of processing, the GPI-anchor is attached to the protein in the endoplasmic reticulum and serves to target the protein to the cell surface. There, the glucosamine-inositol phospholipid moiety is cleaved off and the GPI-modified mannoprotein is covalently attached via its lipidless GPI glycan remnant to the 1,6-beta-glucan of the outer cell wall layer.

The protein resides in the secreted. Its subcellular location is the cell wall. It is found in the membrane. In terms of biological role, beta-glucan associated cell wall protein involved in cell wall structure. May serve as cross-linking or coat-forming wall protein. The polypeptide is Covalently-linked cell wall protein 14 (SSR1) (Candida albicans (strain SC5314 / ATCC MYA-2876) (Yeast)).